We begin with the raw amino-acid sequence, 283 residues long: MAESSSPSPTEEIVRLIKRLSAYVAFKMSSLFSTTSIRNLDSRSIGAIAGLAIAVIFTWRAIRTPGEQRQRRQPKRRIHNAETSSAAAAASQSNLASSVAPEVSSPREDNAVQDVVDQFFQPVKPTLGQIVRQKLSEGRKVTCRLLGVILEETSPEELQKQATVRSSVLEVLLEITKYSDLYLMERVLDDESEAKVLQALENAGVFTSGGLVKDKVLFCSTEIGRTSFVRQLEPDWHIDTNPEISTQLARFIKYQLHVATVKPERTAPNVFTSQSIEQFFGSV.

Alanine 2 bears the N-acetylalanine mark. A helical membrane pass occupies residues 45–62; sequence IGAIAGLAIAVIFTWRAI. Positions 66-107 are disordered; sequence GEQRQRRQPKRRIHNAETSSAAAAASQSNLASSVAPEVSSPR. The segment covering 81–100 has biased composition (low complexity); it reads AETSSAAAAASQSNLASSVA.

It belongs to the peroxin-22 family. Interacts with PEX4.

Its subcellular location is the peroxisome membrane. May be tethered PEX4 to the peroxisome membrane and may be involved in a late step of the matrix protein import. Does not play a role in the biogenesis of the peroxisomal membrane. This is Peroxisome biogenesis protein 22 (PEX22) from Arabidopsis thaliana (Mouse-ear cress).